A 201-amino-acid polypeptide reads, in one-letter code: uncharacterized protein (201 aa).

This is an uncharacterized protein from Saccharomyces cerevisiae (strain ATCC 204508 / S288c) (Baker's yeast).